The following is a 314-amino-acid chain: Glycerol-1-phosphate dehydrogenase [NAD(P)+] (314 aa).

NAD(+) is bound by residues 52 to 56 (GKPLD) and 74 to 77 (TSAS). Asp-79 lines the substrate pocket. Ser-83 is a binding site for NAD(+). Residue Asp-131 participates in substrate binding. Asp-131 and His-211 together coordinate Zn(2+). His-215 serves as a coordination point for substrate. Residue His-231 participates in Zn(2+) binding.

This sequence belongs to the glycerol-1-phosphate dehydrogenase family. Requires Zn(2+) as cofactor.

It localises to the cytoplasm. The enzyme catalyses sn-glycerol 1-phosphate + NAD(+) = dihydroxyacetone phosphate + NADH + H(+). It catalyses the reaction sn-glycerol 1-phosphate + NADP(+) = dihydroxyacetone phosphate + NADPH + H(+). Its pathway is membrane lipid metabolism; glycerophospholipid metabolism. In terms of biological role, catalyzes the NAD(P)H-dependent reduction of dihydroxyacetonephosphate (DHAP or glycerone phosphate) to glycerol 1-phosphate (G1P). The G1P thus generated is used as the glycerophosphate backbone of phospholipids in the cellular membranes of Archaea. This is Glycerol-1-phosphate dehydrogenase [NAD(P)+] from Korarchaeum cryptofilum (strain OPF8).